A 607-amino-acid chain; its full sequence is UPF0329 protein ECU06_1610 (607 aa).

2 disordered regions span residues 312-410 (VHEV…RSKG) and 531-570 (TSSEKTGKGSSPSFGKGDDVDEIEEDGSSDMSGFQYPPGV). The segment covering 313-347 (HEVKERESEEKRREEESLRNAEELLRMEEREKGEG) has biased composition (basic and acidic residues). Positions 353–364 (KGKKKRGKKGAG) are enriched in basic residues. The segment covering 365–374 (KAKEESKEED) has biased composition (basic and acidic residues). A compositionally biased stretch (acidic residues) spans 375–393 (RGEEEEESVEAEVPVEEMA). Over residues 531–543 (TSSEKTGKGSSPS) the composition is skewed to polar residues. Positions 549 to 558 (DVDEIEEDGS) are enriched in acidic residues.

Belongs to the UPF0329 family.

This is UPF0329 protein ECU06_1610 from Encephalitozoon cuniculi (strain GB-M1) (Microsporidian parasite).